Here is a 317-residue protein sequence, read N- to C-terminus: Succinate receptor 1 (317 aa).

Residues 1–27 (MAQNLSCENWLALENILKKYYLSAFYG) lie on the Extracellular side of the membrane. Residue N4 is glycosylated (N-linked (GlcNAc...) asparagine). The helical transmembrane segment at 28–48 (IEFIVGMLGNFTVVFGYLFCM) threads the bilayer. At 49 to 55 (KNWNSSN) the chain is on the cytoplasmic side. A helical membrane pass occupies residues 56–76 (VYLFNLSISDLAFLCTLPMLI). Topologically, residues 77-99 (RSYATGNWTYGDVLCISNRYVLH) are extracellular. Cysteines 91 and 168 form a disulfide. A helical transmembrane segment spans residues 100–120 (ANLYTSILFLTFISIDRYLLM). Topologically, residues 121–133 (KFPFREHILQKKE) are cytoplasmic. A helical transmembrane segment spans residues 134 to 154 (FAILISLAVWVLVTLEVLPML). The Extracellular portion of the chain corresponds to 155 to 181 (TFITSTPIEKGDSCVDYASSGNPKYSL). A helical transmembrane segment spans residues 182–202 (IYSLCLTLLGFLIPLSVMCFF). Residues 203 to 226 (YYKMVVFLKKRSQQQATVLSLNKP) lie on the Cytoplasmic side of the membrane. A helical membrane pass occupies residues 227-247 (LRLVVLAVVIFSVLFTPYHIM). At 248 to 276 (RNVRIASRLDSWPQGCSQKAIKCLYILTR) the chain is on the extracellular side. A helical transmembrane segment spans residues 277-297 (PLAFLNSAVNPIFYFLVGDHF). Topologically, residues 298–317 (RDMLFSKLRQYFKSLTSFRL) are cytoplasmic.

Belongs to the G-protein coupled receptor 1 family. As to expression, expressed in retina.

It is found in the cell membrane. Functionally, g protein-coupled receptor for succinate able to mediate signaling through Gq/GNAQ or Gi/GNAI second messengers depending on the cell type and the processes regulated. Succinate-SUCNR1 signaling serves as a link between metabolic stress, inflammation and energy homeostasisn. In macrophages, plays a range of immune-regulatory roles. During inflammation, succinate-SUCNR1 signaling may act as an anti-inflammatory mediator or boost inflammation depending on the inflammatory status of cells. Hyperpolarizes M2 macrophages versus M1 phenotype through Gq signaling by regulating the transcription of genes involved in immune function. In activated M1 macrophages, plays a pro-inflammatory role in response to LPS. Expressed in dendritic cells, where it is involved in the sensing of immunological danger and enhances immunity. Mediates succinate triggered intracelleular calcium mobilization, induces migratory responses and acts in synergy with Toll-like receptor ligands for the production of proinflammatory cytokines as well as an enhancement of antigen-specific activation of helper T cells. In the small intestine, mediates the activation of tuft cells by dietary succinate and triggers type 2 immunity. In adipocytes, plays an important role in the control of energy metabolism. In response to succinate, controls leptin expression in an AMPK-JNK-CEBPA-dependent as well as circadian clock-regulated manner. In muscle tissue, is expressed in non-muscle cells and coordinates muscle remodeling in response to the succinate produced during exercise training in a paracrine manner. In retina, acts as a mediator of vessel growth during retinal development. In response to succinate, regulates the production of angiogenic factors, including VEGF, by retinal ganglion neurons. This is Succinate receptor 1 (Sucnr1) from Rattus norvegicus (Rat).